Consider the following 279-residue polypeptide: MSAIDTLPPLREVIASHQLSARKSLGQNFLLDLNLTAKIARQAGDLSECDVLEIGPGPGGLTRGLLAEGARRVLAIEKDARCLPALAEIAAAYSGRLEVINGDALEIDPLAHMTPPIRIAANLPYNVGTELLVRWLTPRDWPPFWQSLTLMFQREVAERIVAKPGSKAYGRLALLAQWRAEARIVMSLPPEAFTPPPKVSSAVVHLTALPEPRFPADAAILSRVVAAAFNQRRKMLRAALKGQAPDIEDRLLAAGIKPTERAEQVPLEAFCALARELAR.

Residues asparagine 28, leucine 30, glycine 55, glutamate 77, aspartate 103, and asparagine 122 each coordinate S-adenosyl-L-methionine.

This sequence belongs to the class I-like SAM-binding methyltransferase superfamily. rRNA adenine N(6)-methyltransferase family. RsmA subfamily.

It is found in the cytoplasm. The catalysed reaction is adenosine(1518)/adenosine(1519) in 16S rRNA + 4 S-adenosyl-L-methionine = N(6)-dimethyladenosine(1518)/N(6)-dimethyladenosine(1519) in 16S rRNA + 4 S-adenosyl-L-homocysteine + 4 H(+). Its function is as follows. Specifically dimethylates two adjacent adenosines (A1518 and A1519) in the loop of a conserved hairpin near the 3'-end of 16S rRNA in the 30S particle. May play a critical role in biogenesis of 30S subunits. The sequence is that of Ribosomal RNA small subunit methyltransferase A from Ruegeria pomeroyi (strain ATCC 700808 / DSM 15171 / DSS-3) (Silicibacter pomeroyi).